Here is a 381-residue protein sequence, read N- to C-terminus: 3-dehydroquinate synthase (381 aa).

NAD(+) is bound by residues 81–86, 115–119, 139–140, K152, and K161; these read EGESSK, GVIGD, and TS. Zn(2+) contacts are provided by E194, H256, and H274.

This sequence belongs to the sugar phosphate cyclases superfamily. Dehydroquinate synthase family. The cofactor is Co(2+). Zn(2+) is required as a cofactor. Requires NAD(+) as cofactor.

The protein localises to the cytoplasm. The catalysed reaction is 7-phospho-2-dehydro-3-deoxy-D-arabino-heptonate = 3-dehydroquinate + phosphate. Its pathway is metabolic intermediate biosynthesis; chorismate biosynthesis; chorismate from D-erythrose 4-phosphate and phosphoenolpyruvate: step 2/7. In terms of biological role, catalyzes the conversion of 3-deoxy-D-arabino-heptulosonate 7-phosphate (DAHP) to dehydroquinate (DHQ). The protein is 3-dehydroquinate synthase of Rhodopseudomonas palustris (strain TIE-1).